Consider the following 258-residue polypeptide: Ribosomal RNA small subunit methyltransferase J (258 aa).

Residues 107–108 (RD), 123–124 (ER), 159–160 (SS), and Asp-177 each bind S-adenosyl-L-methionine.

It belongs to the methyltransferase superfamily. RsmJ family.

It localises to the cytoplasm. The catalysed reaction is guanosine(1516) in 16S rRNA + S-adenosyl-L-methionine = N(2)-methylguanosine(1516) in 16S rRNA + S-adenosyl-L-homocysteine + H(+). Functionally, specifically methylates the guanosine in position 1516 of 16S rRNA. The sequence is that of Ribosomal RNA small subunit methyltransferase J from Shewanella sediminis (strain HAW-EB3).